The chain runs to 667 residues: Cysteine-rich receptor-like protein kinase 11 (667 aa).

Positions 1–24 (MKQRSLFSVLCFFFISFGVASVSA) are cleaved as a signal peptide. Gnk2-homologous domains follow at residues 25-129 (QTCT…NTSF) and 135-248 (LNPR…LYTY). At 25–292 (QTCTTDKGTF…SKGISAGVVV (268 aa)) the chain is on the extracellular side. N-linked (GlcNAc...) asparagine glycans are attached at residues Asn-37, Asn-54, Asn-64, Asn-106, Asn-126, Asn-150, and Asn-254. The span at 259 to 268 (SPPPEPPVTV) shows a compositional bias: pro residues. Residues 259–282 (SPPPEPPVTVPQPAGDQDNPTNND) are disordered. Asn-281 is a glycosylation site (N-linked (GlcNAc...) asparagine). A helical transmembrane segment spans residues 293 to 313 (AITVPTVIAILILLVLGFVLF). At 314–667 (RRRKSYQRTK…YTSKSSSFSS (354 aa)) the chain is on the cytoplasmic side. A Protein kinase domain is found at 350–629 (FSTSNKLGEG…IILMLTSNTI (280 aa)). Residues 356 to 364 (LGEGGFGAV) and Lys-378 contribute to the ATP site. The residue at position 423 (Tyr-423) is a Phosphotyrosine. The active-site Proton acceptor is Asp-475. Ser-479 bears the Phosphoserine mark. A Phosphothreonine modification is found at Thr-515. Tyr-523 is subject to Phosphotyrosine.

This sequence belongs to the protein kinase superfamily. Ser/Thr protein kinase family. CRK subfamily. In terms of tissue distribution, detected in root, stem, leaf and flower.

Its subcellular location is the membrane. The enzyme catalyses L-seryl-[protein] + ATP = O-phospho-L-seryl-[protein] + ADP + H(+). It catalyses the reaction L-threonyl-[protein] + ATP = O-phospho-L-threonyl-[protein] + ADP + H(+). The polypeptide is Cysteine-rich receptor-like protein kinase 11 (CRK11) (Arabidopsis thaliana (Mouse-ear cress)).